The primary structure comprises 154 residues: Crossover junction endodeoxyribonuclease RuvC (154 aa).

Catalysis depends on residues Asp-7, Glu-66, and Asp-139. The Mg(2+) site is built by Asp-7, Glu-66, and Asp-139.

It belongs to the RuvC family. Homodimer which binds Holliday junction (HJ) DNA. The HJ becomes 2-fold symmetrical on binding to RuvC with unstacked arms; it has a different conformation from HJ DNA in complex with RuvA. In the full resolvosome a probable DNA-RuvA(4)-RuvB(12)-RuvC(2) complex forms which resolves the HJ. It depends on Mg(2+) as a cofactor.

The protein localises to the cytoplasm. It catalyses the reaction Endonucleolytic cleavage at a junction such as a reciprocal single-stranded crossover between two homologous DNA duplexes (Holliday junction).. Functionally, the RuvA-RuvB-RuvC complex processes Holliday junction (HJ) DNA during genetic recombination and DNA repair. Endonuclease that resolves HJ intermediates. Cleaves cruciform DNA by making single-stranded nicks across the HJ at symmetrical positions within the homologous arms, yielding a 5'-phosphate and a 3'-hydroxyl group; requires a central core of homology in the junction. The consensus cleavage sequence is 5'-(A/T)TT(C/G)-3'. Cleavage occurs on the 3'-side of the TT dinucleotide at the point of strand exchange. HJ branch migration catalyzed by RuvA-RuvB allows RuvC to scan DNA until it finds its consensus sequence, where it cleaves and resolves the cruciform DNA. The protein is Crossover junction endodeoxyribonuclease RuvC of Aliarcobacter butzleri (strain RM4018) (Arcobacter butzleri).